The primary structure comprises 556 residues: Urocanate hydratase (556 aa).

Residues Gly52–Gly53, Gln130, Gly176–Gly178, Glu196, Arg201, Asn242–Ala243, Gln263–His267, Tyr273–Leu274, and Tyr322 each bind NAD(+). Residue Cys410 is part of the active site. Position 492 (Gly492) interacts with NAD(+).

It belongs to the urocanase family. It depends on NAD(+) as a cofactor.

The protein localises to the cytoplasm. It carries out the reaction 4-imidazolone-5-propanoate = trans-urocanate + H2O. It functions in the pathway amino-acid degradation; L-histidine degradation into L-glutamate; N-formimidoyl-L-glutamate from L-histidine: step 2/3. Catalyzes the conversion of urocanate to 4-imidazolone-5-propionate. This chain is Urocanate hydratase, found in Bradyrhizobium sp. (strain ORS 278).